The sequence spans 615 residues: DNA mismatch repair protein MutL (615 aa).

The tract at residues 362 to 397 (HFAEPAVREPVAPRYSPAPASGSRPAAPWPNAQPGY) is disordered. The span at 373-387 (APRYSPAPASGSRPA) shows a compositional bias: low complexity.

Belongs to the DNA mismatch repair MutL/HexB family.

In terms of biological role, this protein is involved in the repair of mismatches in DNA. It is required for dam-dependent methyl-directed DNA mismatch repair. May act as a 'molecular matchmaker', a protein that promotes the formation of a stable complex between two or more DNA-binding proteins in an ATP-dependent manner without itself being part of a final effector complex. The protein is DNA mismatch repair protein MutL of Escherichia coli O81 (strain ED1a).